The primary structure comprises 108 residues: Cytochrome c oxidase subunit 1 (108 aa).

A helical membrane pass occupies residues 10-30 (AFVAPVLGLLGFIPGGAGGIV). His49 contacts heme a3. The next 2 membrane-spanning stretches (helical) occupy residues 50 to 70 (FHLQ…YWLL) and 85 to 105 (LGLA…VGLH). His51 provides a ligand contact to Fe(II)-heme a.

It belongs to the heme-copper respiratory oxidase family. Heme is required as a cofactor. Requires Cu cation as cofactor.

Its subcellular location is the cell membrane. It carries out the reaction 4 Fe(II)-[cytochrome c] + O2 + 8 H(+)(in) = 4 Fe(III)-[cytochrome c] + 2 H2O + 4 H(+)(out). It functions in the pathway energy metabolism; oxidative phosphorylation. This is Cytochrome c oxidase subunit 1 (cbaA) from Thermus thermophilus.